The following is a 706-amino-acid chain: Polyribonucleotide nucleotidyltransferase (706 aa).

Positions 487 and 493 each coordinate Mg(2+). The KH domain occupies 554 to 613; the sequence is PRIHTMKISSDKIKDVIGKGGAVIRALCEETGTTIEIEDDGTIKIAATEGAAAKEAIRRI. The S1 motif domain maps to 623-691; sequence GRIYQGKVAR…RQGRVRLSMK (69 aa).

This sequence belongs to the polyribonucleotide nucleotidyltransferase family. As to quaternary structure, component of the RNA degradosome, which is a multiprotein complex involved in RNA processing and mRNA degradation. The cofactor is Mg(2+).

It is found in the cytoplasm. It carries out the reaction RNA(n+1) + phosphate = RNA(n) + a ribonucleoside 5'-diphosphate. Functionally, involved in mRNA degradation. Catalyzes the phosphorolysis of single-stranded polyribonucleotides processively in the 3'- to 5'-direction. The protein is Polyribonucleotide nucleotidyltransferase of Vibrio atlanticus (strain LGP32) (Vibrio splendidus (strain Mel32)).